An 837-amino-acid polypeptide reads, in one-letter code: MSDTDLNATRRDVLKSGAVAAVGLSGGGLLSTLQEADDSDTAGDAVTSFLGEDQVVKTACSPNCRGKCPLDVFVRDGQIKKVEQQVPAAKTFKRGCTLGMTHLQRVYNADRLKYPMKRTSWSPDDPQPDQRGADAQFERIAWDDALDLVADGIQRAKREYGPRSLLWHSGSGDGGITGYRRLKELVGGLQDDFTYGIDTNVGQGFNRVTGEGGVFMPPTNTADDWVNAETIIIWGSDIFASQFQMDAEWILDAKRNGAKLVVVDPVYTNTAEKADLWLPIKPGKDTHLALAMMQYIFEHDHYDEAFLRSRTNAPALVRADDGTLLDPASVTATPPEDGIVVFNTETGSPEVVPAETNGPFALFGEWTIDGTTVHTGLTALREQASSYPPQAVADTAGLAAADIETAADWLATRGPGGIMPSYGVGRYLYGHVFGQTYATLLALTGDYGRHGNIHAQHPSYDGSYLETGDWNDPDGAAGVDTYGYNRVLDLLANGDPVQTKFMYGMNSNMLGNQFPERDRWLDAMSNLDTVVWADIYHTPTTRQADIILPAAHWFETEDLLTTYTHPNLSYRTKAHDPLWEARDDYYIMAGLAQRLGHGDKFPDDKHDVLDRFVKNDDRLSWDALRETGTVATDETPTVAYTDEFGTESGRITVYDDDAPVEEGPALPDDGVSLEVPKPLEARTADDWAHADEYPLLFMQKHSKWRIHSQWANVPWLREINTEPQLDIHPKDATRRGIDDGEYVRVHNDRGSVVVRAKYNDGIQPGLVNTDQGWWARDFVDGHLQDLISAETAKVGRTFAFYDCRVEVTRAADEHQSNEYTQHNPRGSSGTATDGDSS.

The tat-type signal signal peptide spans 1 to 36 (MSDTDLNATRRDVLKSGAVAAVGLSGGGLLSTLQEA). A 4Fe-4S Mo/W bis-MGD-type domain is found at 53-110 (DQVVKTACSPNCRGKCPLDVFVRDGQIKKVEQQVPAAKTFKRGCTLGMTHLQRVYNAD). 4 residues coordinate [4Fe-4S] cluster: C60, C64, C68, and C96. N200 contacts Mo-bis(molybdopterin guanine dinucleotide). Residues 813–837 (EHQSNEYTQHNPRGSSGTATDGDSS) are disordered. Low complexity predominate over residues 826-837 (GSSGTATDGDSS).

Belongs to the prokaryotic molybdopterin-containing oxidoreductase family. In terms of assembly, probable multiprotein complex that likely consists of DmsA, DmsB and DmsC. It depends on Mo-bis(molybdopterin guanine dinucleotide) as a cofactor. [4Fe-4S] cluster serves as cofactor. In terms of processing, predicted to be exported by the Tat system. The position of the signal peptide cleavage has not been experimentally proven.

Its subcellular location is the cell membrane. It catalyses the reaction dimethyl sulfide + a menaquinone + H2O = dimethyl sulfoxide + a menaquinol. Functionally, dimethyl sulfoxide (DMSO) reductase catalyzes the reduction of dimethyl sulfoxide (DMSO) to dimethyl sulfide (DMS) during anaerobic respiration; it can also use trimethylamine N-oxide (TMAO) as terminal electron acceptor. Required for anaerobic respiration on DMSO and TMAO; subunit A is proposed to be catalytically active. This is Putative dimethyl sulfoxide reductase catalytic subunit A (dmsA) from Halobacterium salinarum (strain ATCC 700922 / JCM 11081 / NRC-1) (Halobacterium halobium).